A 544-amino-acid polypeptide reads, in one-letter code: MAKRIIYNENARRALEKGMDILAESVAVTLGPKGRNVVLEKKFGAPQIVNDGVTIAKEIELEDHVENTGVSLIRQAASKTNDAAGDGTTTATVLAHAMVKEGLRNVAAGANPIALKRGIDKAAGFLVEKIAEHARQIEDSKAIAQVGAISAGNDEEVGKMIAEAMDKVGKEGVISLEEGKSMQTELEITEGMRFDKGYISPYFATDMERMEASLEEPQILITDKKIALVQDLVPVLEQVARSGKPLLILAEDIEKEALATLVVNRLRGVVNVAAVKAPGFGDRRKAMLEDIAVLTGGQVITEDAGLKLENAKLDMLGKARRITITKDNTTIVAEGNEKEVKARCEQIRRQMDETDSSYDKEKLQERLAKLAGGVAVVKVGAATETEMKDRKLRLEDAINATKAAVEEGIVPGGGTTLAHLAPELETWANENLQSEELTGSLIVSRALLAPLKRIAENAGQNGAVIGERVKEKDFNTGFNAANNEFVDMFEAGIVDPAKVTRSALQNAASIAGMVLTTECIVVDKPEPKENAPAGAGMGGGDFDY.

Residues 29-32 (TLGP), 86-90 (DGTTT), Gly413, 479-481 (NAA), and Asp495 each bind ATP.

Belongs to the chaperonin (HSP60) family. As to quaternary structure, forms a cylinder of 14 subunits composed of two heptameric rings stacked back-to-back. Interacts with the co-chaperonin GroES.

It is found in the cytoplasm. It carries out the reaction ATP + H2O + a folded polypeptide = ADP + phosphate + an unfolded polypeptide.. In terms of biological role, together with its co-chaperonin GroES, plays an essential role in assisting protein folding. The GroEL-GroES system forms a nano-cage that allows encapsulation of the non-native substrate proteins and provides a physical environment optimized to promote and accelerate protein folding. This is Chaperonin GroEL 2 from Trichodesmium erythraeum (strain IMS101).